Reading from the N-terminus, the 285-residue chain is Putative hydrolase DDAH2 (285 aa).

The Proton donor role is filled by histidine 171. The Nucleophile role is filled by cysteine 276.

Belongs to the DDAH family. Post-translationally, phosphorylated by TBK1. Phosphorylation inhibits the translocation into the mitochondrion upon Sendai viral infection. As to expression, detected in heart, placenta, lung, liver, skeletal muscle, kidney and pancreas, and at very low levels in brain.

It is found in the cytoplasm. Its subcellular location is the mitochondrion. Putative hydrolase with unknown substrate. Does not hydrolyze N(G),N(G)-dimethyl-L-arginine (ADMA) which acts as an inhibitor of NOS. In endothelial cells, induces expression of vascular endothelial growth factor (VEGF) via phosphorylation of the transcription factor SP1 by PKA in a process that is independent of NO and NO synthase. Similarly, enhances pancreatic insulin secretion through SP1-mediated transcriptional up-regulation of secretagogin/SCGN, an insulin vesicle docking protein. Upon viral infection, relocates to mitochondria where it promotes mitochondrial fission through activation of DNM1L leading to the inhibition of innate response activation mediated by MAVS. The sequence is that of Putative hydrolase DDAH2 from Homo sapiens (Human).